The primary structure comprises 293 residues: 6-phospho-5-dehydro-2-deoxy-D-gluconate aldolase (293 aa).

Residue D85 is the Proton donor of the active site. Zn(2+)-binding residues include H86 and H180. G181 contacts dihydroxyacetone phosphate. H208 contacts Zn(2+). Dihydroxyacetone phosphate is bound by residues G209 to S211 and N230 to T233. T233 is subject to Phosphothreonine.

Belongs to the class II fructose-bisphosphate aldolase family. IolJ subfamily. Requires Zn(2+) as cofactor.

The catalysed reaction is 6-phospho-5-dehydro-2-deoxy-D-gluconate = 3-oxopropanoate + dihydroxyacetone phosphate. Its pathway is polyol metabolism; myo-inositol degradation into acetyl-CoA; acetyl-CoA from myo-inositol: step 6/7. Produces dihydroxyacetone phosphate (DHAP or glycerone phosphate) and malonic semialdehyde (MSA or 3-oxopropanoate) from 6-phospho-5-dehydro-2-deoxy-D-gluconate (DKGP). The protein is 6-phospho-5-dehydro-2-deoxy-D-gluconate aldolase (iolJ) of Shouchella clausii (strain KSM-K16) (Alkalihalobacillus clausii).